Here is a 451-residue protein sequence, read N- to C-terminus: REST corepressor 3 (451 aa).

Residues 1–55 (MPGMMEKGPELLGKSRSANGGAKSPAGGGGSSANGGLHFSEPESGCSSDDEHGDV) are disordered. Residues 55-139 (VGMRVGAEYQ…KSLADLPNFT (85 aa)) enclose the ELM2 domain. A Glycyl lysine isopeptide (Lys-Gly) (interchain with G-Cter in SUMO2) cross-link involves residue lysine 76. The SANT domain occupies 140 to 191 (PFPDEWTVEDKVLFEQAFSFHGKSFHRIQQMLPDKTIASLVKYYYSWKKTRS). The tract at residues 204-275 (ANRHNQGDSD…SQRSKCRPPK (72 aa)) is disordered. Residues serine 212 and serine 227 each carry the phosphoserine modification. The segment covering 218-240 (EAHPMDGNDSDYDPKKEAKREGN) has biased composition (basic and acidic residues). Lysine 249 is covalently cross-linked (Glycyl lysine isopeptide (Lys-Gly) (interchain with G-Cter in SUMO2)). The segment covering 261 to 273 (QHRHHSQRSKCRP) has biased composition (basic residues). A coiled-coil region spans residues 293–329 (AANTILRQLDMELISLKRQVQNAKQVNSALKQKMEGG). The segment at 333–451 (FKPPEAQTPQ…IQTDSQPSLH (119 aa)) is disordered. Positions 349–361 (PSPPAPSSTPTPT) are enriched in pro residues. Low complexity predominate over residues 375 to 384 (RPTLPAAPAL). An asymmetric dimethylarginine mark is found at arginine 401 and arginine 413. Residues 431 to 451 (VGGQQPPSLIGIQTDSQPSLH) show a composition bias toward polar residues.

The protein belongs to the CoREST family.

It localises to the nucleus. Its function is as follows. May act as a component of a corepressor complex that represses transcription. This chain is REST corepressor 3 (Rcor3), found in Mus musculus (Mouse).